The sequence spans 438 residues: Serine/threonine-protein kinase VIK (438 aa).

The tract at residues 1-31 (MSSDSPAAGDGGEQAAAGTSVPSPSYDKQKE) is disordered. ANK repeat units follow at residues 36 to 65 (SRTS…TLVH), 70 to 99 (DKRT…DVNA), and 103 to 133 (WKNT…SYGQ). In terms of domain architecture, Protein kinase spans 162-427 (FSNAAMIGKG…KRLEKIKETL (266 aa)). ATP is bound by residues 168-176 (IGKGSFGEI) and lysine 189. The active-site Proton acceptor is aspartate 285.

This sequence belongs to the protein kinase superfamily. Ser/Thr protein kinase family. Interacts with BRL2. Binds to MSSP1/TMT1 at the tonoplast. Phosphorylated. Restricted to mature vascular cells. Mostly expressed in mature leaves and seeds, and, to a lower level, in seedlings, young leaves, flowers and siliques.

It localises to the vacuole. The catalysed reaction is L-seryl-[protein] + ATP = O-phospho-L-seryl-[protein] + ADP + H(+). It catalyses the reaction L-threonyl-[protein] + ATP = O-phospho-L-threonyl-[protein] + ADP + H(+). Functionally, serine/threonine protein kinase which may function as an adapter protein for BRL2. Required during vascular development for the establishment of vein pattern in foliar organs. Mediates MSSP1/TMT1 phosphorylation and activation to enhance its carrier activity and consequently vacuolar sugar accumulation, particularly in response to cold. The protein is Serine/threonine-protein kinase VIK of Arabidopsis thaliana (Mouse-ear cress).